A 310-amino-acid polypeptide reads, in one-letter code: Thioesterase pytI (310 aa).

2 helical membrane-spanning segments follow: residues 14–34 (SLTP…YFAL) and 95–115 (LLGG…IFVA). The tract at residues 168–195 (TLSDDASTTTSSDNSRASTDHGADSEVE) is disordered. Residues 170–184 (SDDASTTTSSDNSRA) show a composition bias toward low complexity.

This sequence belongs to the AMT4 thioesterase family.

The protein resides in the membrane. It functions in the pathway secondary metabolite biosynthesis. Thioesterase; part of the gene cluster that mediates the biosynthesis of pyranterreones, a family of antioxidative compounds. The first step of pyranonigrins biosynthesis is performed by the hybrid PKS-NRPS synthetase pytA that condenses 4 malonyl-CoA units ato the acetyl starter unit by the modular PKS of pytA. The acyl chain is then connected to an L-serine through the amide bond by the modular NRPS of pytA. A tetramic acid is formed and released from the PKS-NRPS pytA to give pyranterreone 5 with the help of the thioesterase pytI. Pyranterreone 5 could be methylated by pytC to afford pyranterreone 6. Both pyranterreones 5 and 6 are subsequently oxidized by the FAD-linked oxidoreductase pytB and the cytochrome P450 monooxygenase pytD to form the fused gamma-pyrone core, resulting in pyranterreones 7 and 11, respectively. The hydroxy group at C-8 of pyranterreones 7 and 11 are dehydrated by the aspartyl protease pytH to form a delta-7 double bond to give pyranterreones 3 and 1, 2 accordingly. The exo-methylene of pyranterreone 3 could be reduced into a pendant methyl by reductase pytE to provide pyranterreone 4, also known as cordylactam. Pyranterreone 4 can be reconverted to pyranterreone 3 through pytB-catalyzed dehydrogenation or further oxidized to pyranterreones 9 and 10. The chain is Thioesterase pytI from Aspergillus terreus.